The following is a 216-amino-acid chain: Large ribosomal subunit protein uL3 (216 aa).

Disordered stretches follow at residues 89–108 (QRAS…VGGF) and 139–158 (NTHG…QCQS). Gln157 carries the N5-methylglutamine modification.

This sequence belongs to the universal ribosomal protein uL3 family. In terms of assembly, part of the 50S ribosomal subunit. Forms a cluster with proteins L14 and L19. In terms of processing, methylated by PrmB.

Its function is as follows. One of the primary rRNA binding proteins, it binds directly near the 3'-end of the 23S rRNA, where it nucleates assembly of the 50S subunit. This chain is Large ribosomal subunit protein uL3, found in Halorhodospira halophila (strain DSM 244 / SL1) (Ectothiorhodospira halophila (strain DSM 244 / SL1)).